Here is a 448-residue protein sequence, read N- to C-terminus: Exodeoxyribonuclease 7 large subunit (448 aa).

It belongs to the XseA family. In terms of assembly, heterooligomer composed of large and small subunits.

The protein resides in the cytoplasm. It catalyses the reaction Exonucleolytic cleavage in either 5'- to 3'- or 3'- to 5'-direction to yield nucleoside 5'-phosphates.. Functionally, bidirectionally degrades single-stranded DNA into large acid-insoluble oligonucleotides, which are then degraded further into small acid-soluble oligonucleotides. This Enterococcus faecalis (strain ATCC 700802 / V583) protein is Exodeoxyribonuclease 7 large subunit.